Reading from the N-terminus, the 329-residue chain is Malate dehydrogenase (329 aa).

11 to 17 (GAAGQIG) is an NAD(+) binding site. Substrate-binding residues include R92 and R98. Residues N105, Q112, and 129 to 131 (VGN) each bind NAD(+). The substrate site is built by N131 and R165. Catalysis depends on H190, which acts as the Proton acceptor.

Belongs to the LDH/MDH superfamily. MDH type 2 family.

It carries out the reaction (S)-malate + NAD(+) = oxaloacetate + NADH + H(+). Catalyzes the reversible oxidation of malate to oxaloacetate. The chain is Malate dehydrogenase from Laribacter hongkongensis (strain HLHK9).